The primary structure comprises 931 residues: Beta-mannosidase A (931 aa).

Residues 1–21 (MRHSIGLAAALLAPTLPVALG) form the signal peptide. N-linked (GlcNAc...) asparagine glycans are attached at residues Asn40, Asn79, Asn247, Asn282, Asn316, Asn326, and Asn347. Glu479 functions as the Proton donor in the catalytic mechanism. 8 N-linked (GlcNAc...) asparagine glycosylation sites follow: Asn550, Asn608, Asn658, Asn738, Asn790, Asn798, Asn830, and Asn918.

Belongs to the glycosyl hydrolase 2 family. Beta-mannosidase A subfamily. As to quaternary structure, homodimer.

The protein resides in the secreted. The catalysed reaction is Hydrolysis of terminal, non-reducing beta-D-mannose residues in beta-D-mannosides.. Its pathway is glycan metabolism; N-glycan degradation. Its function is as follows. Exoglycosidase that cleaves the single beta-linked mannose residue from the non-reducing end of beta-mannosidic oligosaccharides of various complexity and length. Involved in the degradation of polymeric mannan and galactomannan. In Aspergillus niger (strain ATCC MYA-4892 / CBS 513.88 / FGSC A1513), this protein is Beta-mannosidase A (mndA).